The following is a 690-amino-acid chain: Glycine--tRNA ligase beta subunit (690 aa).

The protein belongs to the class-II aminoacyl-tRNA synthetase family. Tetramer of two alpha and two beta subunits.

The protein localises to the cytoplasm. It catalyses the reaction tRNA(Gly) + glycine + ATP = glycyl-tRNA(Gly) + AMP + diphosphate. The chain is Glycine--tRNA ligase beta subunit from Proteus mirabilis (strain HI4320).